We begin with the raw amino-acid sequence, 109 residues long: Short-chain dehydrogenase/reductase homolog YusS (109 aa).

Belongs to the short-chain dehydrogenases/reductases (SDR) family.

This is Short-chain dehydrogenase/reductase homolog YusS (yusS) from Bacillus subtilis (strain 168).